A 513-amino-acid polypeptide reads, in one-letter code: Calcium-dependent protein kinase 2 (513 aa).

A lipid anchor (N-myristoyl glycine) is attached at Gly-2. The Protein kinase domain occupies 72 to 326 (YIIDEKLGQG…IEEALNHPWI (255 aa)). ATP-binding positions include 78–86 (LGQGTYGCV) and Lys-101. Asp-192 (proton acceptor) is an active-site residue. The short motif at 345-353 (NLKNFKKEN) is the J domain autoinhibitory motif element. The segment at 345-380 (NLKNFKKENELKKIALTIIAKHLCDVEINNLRNIFI) is j domain. The J domain EF-hand interaction motif signature appears at 354–363 (ELKKIALTII). 4 consecutive EF-hand domains span residues 370 to 405 (VEINNLRNIFIALDVDNSGTLSSQEILDGLKKIGYQ), 406 to 441 (KIPPDIHQVLRDIDSNASGQIHYTDFLAATIDKQTY), 442 to 477 (LKKEVCLIPFKFFDIDGNGKISVEELKRIFGRDDIE), and 480 to 513 (LIDKAIDSLLQEVDLNGDGEIDFHEFMLMMSKKK). Ca(2+)-binding residues include Asp-383, Asp-385, Ser-387, Thr-389, and Glu-394. Ca(2+) is bound by residues Asp-455, Asp-457, Asn-459, Lys-461, Glu-466, Asp-493, Asn-495, Asp-497, Glu-499, and Glu-504.

Belongs to the protein kinase superfamily. Ser/Thr protein kinase family. CDPK subfamily. In terms of assembly, monomer. Mg(2+) serves as cofactor. Post-translationally, myristoylated; myristoylation may target it to different subcellular compartments. In terms of processing, autophosphorylated in vitro.

It catalyses the reaction L-seryl-[protein] + ATP = O-phospho-L-seryl-[protein] + ADP + H(+). The enzyme catalyses L-threonyl-[protein] + ATP = O-phospho-L-threonyl-[protein] + ADP + H(+). Activated by calcium. Upon calcium binding to the EF-hand domains, the C-terminus of the junction domain (J domain) undergoes a conformational change which results in the dissociation of the pseudo-substrate inhibitory motif from the catalytic domain. This, in turn, may facilitate the autophosphorylation of the activation loop at Thr-232, which leads to the kinase activation. Its function is as follows. Calcium-dependent protein kinase which acts as a sensor and effector of intracellular Ca(2+) levels probably in part downstream of cGMP-activated PKG kinase. During male gametogenesis in the mosquito gut, required for male exflagellation, possibly by regulating male gamete exit from the host erythrocytes. Not required for asexual blood stage proliferation. This is Calcium-dependent protein kinase 2 from Plasmodium falciparum (isolate K1 / Thailand).